Consider the following 560-residue polypeptide: Mitochondria-eating protein (560 aa).

The interaction with YWHAG/14-3-3 protein gamma stretch occupies residues 1 to 294; that stretch reads MADNLRKLVS…SHSRNHSRSR (294 aa). Phosphoserine is present on residues S13, S85, S156, and S159. 2 coiled-coil regions span residues 118-186 and 223-248; these read DRNI…SRHR and DYEK…LQGR. Disordered stretches follow at residues 178-217 and 243-316; these read QAQE…AQRK and SVLQ…AKLS. The span at 181–209 shows a compositional bias: basic and acidic residues; sequence EESRHRPPEHRSSEKRGSERRRVEPRGAD. Low complexity predominate over residues 248–262; that stretch reads RSTRSRSPSPASCSR. Basic residues predominate over residues 263-293; that stretch reads SRSHSHSRSRSHSHSRSGSHSRSHSRNHSRS. The span at 300–310 shows a compositional bias: polar residues; it reads TAVSGVRSPSP. Phosphoserine is present on residues S307, S309, and S531.

The protein belongs to the MIEAP family. In terms of assembly, interacts (via coiled-coil domains) with BNIP3L (via BH3 domain). Interacts (via coiled-coil domains) with BNIP3 (via BH3 domain). Interacts with YWHAG/14-3-3 protein gamma; a protein that also plays a role in MALM.

Its subcellular location is the cytoplasm. The protein localises to the cytosol. It is found in the mitochondrion outer membrane. The protein resides in the mitochondrion matrix. Its function is as follows. Key regulator of mitochondrial quality that mediates the repairing or degradation of unhealthy mitochondria in response to mitochondrial damage. Mediator of mitochondrial protein catabolic process (also named MALM) by mediating the degradation of damaged proteins inside mitochondria by promoting the accumulation in the mitochondrial matrix of hydrolases that are characteristic of the lysosomal lumen. Also involved in mitochondrion degradation of damaged mitochondria by promoting the formation of vacuole-like structures (named MIV), which engulf and degrade unhealthy mitochondria by accumulating lysosomes. The physical interaction of SPATA18/MIEAP, BNIP3 and BNIP3L/NIX at the mitochondrial outer membrane regulates the opening of a pore in the mitochondrial double membrane in order to mediate the translocation of lysosomal proteins from the cytoplasm to the mitochondrial matrix. Binds cardiolipin. May form molecular condensates (non-membrane-bounded organelles) within mitochondria that compartmentalize and promote cardiolipin metabolism. The protein is Mitochondria-eating protein (SPATA18) of Sus scrofa (Pig).